Reading from the N-terminus, the 269-residue chain is Formamidopyrimidine-DNA glycosylase (269 aa).

Catalysis depends on Pro2, which acts as the Schiff-base intermediate with DNA. Glu3 functions as the Proton donor in the catalytic mechanism. Residue Lys57 is the Proton donor; for beta-elimination activity of the active site. DNA is bound by residues His90, Arg109, and Lys150. An FPG-type zinc finger spans residues 235–269 (QVYGRKGEPCRVCGTPIAATKHAQRATFYCRHCQK). Arg259 acts as the Proton donor; for delta-elimination activity in catalysis.

This sequence belongs to the FPG family. In terms of assembly, monomer. Zn(2+) is required as a cofactor.

It carries out the reaction Hydrolysis of DNA containing ring-opened 7-methylguanine residues, releasing 2,6-diamino-4-hydroxy-5-(N-methyl)formamidopyrimidine.. The enzyme catalyses 2'-deoxyribonucleotide-(2'-deoxyribose 5'-phosphate)-2'-deoxyribonucleotide-DNA = a 3'-end 2'-deoxyribonucleotide-(2,3-dehydro-2,3-deoxyribose 5'-phosphate)-DNA + a 5'-end 5'-phospho-2'-deoxyribonucleoside-DNA + H(+). Involved in base excision repair of DNA damaged by oxidation or by mutagenic agents. Acts as a DNA glycosylase that recognizes and removes damaged bases. Has a preference for oxidized purines, such as 7,8-dihydro-8-oxoguanine (8-oxoG). Has AP (apurinic/apyrimidinic) lyase activity and introduces nicks in the DNA strand. Cleaves the DNA backbone by beta-delta elimination to generate a single-strand break at the site of the removed base with both 3'- and 5'-phosphates. The polypeptide is Formamidopyrimidine-DNA glycosylase (Salmonella paratyphi B (strain ATCC BAA-1250 / SPB7)).